A 656-amino-acid polypeptide reads, in one-letter code: Anion exchange transporter (656 aa).

Over 1-75 (MTGAKRKKKS…LAFAVLSSVH (75 aa)) the chain is Cytoplasmic. A helical transmembrane segment spans residues 76–96 (PVFGLYGSLFPAIIYAIFGMG). Residues 97 to 144 (HHVATGTFALTSLISANAVERIVPQNMQNLTTQSNTSVLGLSDFEMQR) lie on the Extracellular side of the membrane. The helical transmembrane segment at 145 to 165 (IHVAAAVSFLGGVIQVAMFVL) threads the bilayer. Position 166 (Gln-166) is a topological domain, cytoplasmic. A helical membrane pass occupies residues 167 to 187 (LGSATFVVTEPVISAMTTGAA). The Extracellular portion of the chain corresponds to 188 to 202 (THVVTSQVKYLLGMK). A helical transmembrane segment spans residues 203–223 (MPYISGPLGFFYIYAYVFENI). Residues 224–227 (KSVR) are Cytoplasmic-facing. A helical membrane pass occupies residues 228-248 (LEALLLSLLSIVVLVLVKELN). The Extracellular portion of the chain corresponds to 249-254 (EQFKRK). Residues 255–275 (IKVVLPVDLVLIIAASFACYC) form a helical membrane-spanning segment. Topologically, residues 276–306 (TNMENTYGLEVVGHIPQGIPSPRAPPMNILS) are cytoplasmic. A helical membrane pass occupies residues 307–327 (AVITEAFGVALVGYVASLALA). Residues 328–343 (QGSAKKFKYSIDDNQE) are Extracellular-facing. The chain crosses the membrane as a helical span at residues 344-364 (FLAHGLSNIVSSFFFCIPSAA). At 365–383 (AMGRTAGLYSTGAKTQVAC) the chain is on the cytoplasmic side. Transmembrane regions (helical) follow at residues 384–404 (LISCIFVLIVIYAIGPLLYWL) and 405–425 (PMCVLASIIVVGLKGMLIQFR). Residues 426-448 (DLKKYWNVDKIDWGIWVSTYVFT) lie on the Extracellular side of the membrane. The helical transmembrane segment at 449–469 (ICFAANVGLLFGVVCTIAIVI) threads the bilayer. The Cytoplasmic portion of the chain corresponds to 470–656 (GRFPRAMTVS…LSKLSDHSEV (187 aa)). In terms of domain architecture, STAS spans 492–641 (TEMDSETLQQ…ESVSAAISHI (150 aa)). Positions 641–656 (IHSNKNLSKLSDHSEV) are membrane targeting.

It belongs to the SLC26A/SulP transporter (TC 2.A.53) family. In terms of tissue distribution, expressed in the thyroid gland (at protein level). Expressed in tonsillar high endothelial venule endothelial cells (HEVEC), placenta and in testis, expressed in a subgroup of basal cells in the epididymal ducts.

The protein localises to the basolateral cell membrane. It localises to the recycling endosome membrane. The protein resides in the apical cell membrane. Its subcellular location is the lateral cell membrane. It carries out the reaction chloride(in) = chloride(out). The enzyme catalyses iodide(out) = iodide(in). It catalyses the reaction bromide(in) = bromide(out). The catalysed reaction is oxalate(in) = oxalate(out). It carries out the reaction nitrate(in) = nitrate(out). The enzyme catalyses sulfate(in) = sulfate(out). It catalyses the reaction thiocyanate(in) = thiocyanate(out). The catalysed reaction is D-gluconate(in) = D-gluconate(out). It carries out the reaction hydrogencarbonate(in) = hydrogencarbonate(out). The enzyme catalyses hydrogencarbonate(in) + chloride(out) = hydrogencarbonate(out) + chloride(in). With respect to regulation, is active at both alkaline and acidic pH. Activity is inhibited by 4,4'-Di-isothiocyanatostilbene-2,2'-disulfonic acid (DIDS - an inhibitor of several anion channels and transporters). Acts as an anion channel mediating the transport of chloride, sulfate and oxalate ions. Mediates the transport of bromide, iodide, nitrate, gluconate, thiocyanate and bicarbonate ions. Its permeability towards bicarbonate is weak and increases when pH is above 7. Mediates thiocyanate transport in retinal pigment epithelium cells. Mediates iodide transport in the thyroid gland, playing an important role in the synthesis of thyroid hormones and the maintenance of thyroid function. Although it is an anion channel, according to PubMed:12736153 and PubMed:32119864 it has been shown to exhibit chloride-bicarbonate exchanger activity. This is Anion exchange transporter from Homo sapiens (Human).